The sequence spans 495 residues: Two-component response regulator-like APRR3 (495 aa).

A Response regulatory domain is found at 65 to 183 (KVLLVENDDS…ELKNLWQHVW (119 aa)). 2 disordered regions span residues 188 to 441 (SSSG…RWAQ) and 465 to 495 (HSRK…SEDN). Residues 206–217 (PESTQGSENDAS) show a composition bias toward polar residues. Residues 231 to 248 (GLSNQDGGSDNGSGTQSS) are compositionally biased toward low complexity. Positions 256–265 (TKSTSPSNQF) are enriched in polar residues. Positions 284–293 (RLKEAEDQKE) are enriched in basic and acidic residues. The span at 294–304 (QIGTGSQTGMS) shows a compositional bias: polar residues. A compositionally biased stretch (basic and acidic residues) spans 307–319 (KKAEEPGDLEKNA). Polar residues predominate over residues 335-350 (NRSSGNSQVESKAPSS). The stretch at 349-372 (SSNREDLQSLEQTLKKTREDRDYK) forms a coiled coil. A compositionally biased stretch (basic and acidic residues) spans 351–378 (NREDLQSLEQTLKKTREDRDYKVGDRSV). 2 stretches are compositionally biased toward polar residues: residues 380–395 (RHSN…NGAT) and 420–436 (GSSS…SSGS). Residues 442 to 484 (REAALMKFRLKRKERCFEKKVRYHSRKKLAEQRPHVKGQFIRK) form the CCT domain. The span at 483–495 (RKRDDHKSGSEDN) shows a compositional bias: basic and acidic residues.

It belongs to the ARR-like family. As to quaternary structure, interacts with APRR1/TOC1 (via N-terminus). In terms of processing, phosphorylated by WNK1; during the night. Phosphorylation is required for optimal interaction with APRR1/TOC1.

It localises to the nucleus. Its function is as follows. Controls photoperiodic flowering response. Component of the circadian clock. Controls the degradation of APRR1/TOC1 by the SCF(ZTL) complex. Expression of several members of the ARR-like family is controlled by circadian rhythm. The particular coordinated sequential expression of APRR9, APRR7, APRR5, APRR3 and APPR1 result to circadian waves that may be at the basis of the endogenous circadian clock. The polypeptide is Two-component response regulator-like APRR3 (APRR3) (Arabidopsis thaliana (Mouse-ear cress)).